Consider the following 278-residue polypeptide: ATP synthase subunit delta (278 aa).

It belongs to the ATPase delta chain family. In terms of assembly, F-type ATPases have 2 components, F(1) - the catalytic core - and F(0) - the membrane proton channel. F(1) has five subunits: alpha(3), beta(3), gamma(1), delta(1), epsilon(1). F(0) has three main subunits: a(1), b(2) and c(10-14). The alpha and beta chains form an alternating ring which encloses part of the gamma chain. F(1) is attached to F(0) by a central stalk formed by the gamma and epsilon chains, while a peripheral stalk is formed by the delta and b chains.

It is found in the cell membrane. Its function is as follows. F(1)F(0) ATP synthase produces ATP from ADP in the presence of a proton or sodium gradient. F-type ATPases consist of two structural domains, F(1) containing the extramembraneous catalytic core and F(0) containing the membrane proton channel, linked together by a central stalk and a peripheral stalk. During catalysis, ATP synthesis in the catalytic domain of F(1) is coupled via a rotary mechanism of the central stalk subunits to proton translocation. This protein is part of the stalk that links CF(0) to CF(1). It either transmits conformational changes from CF(0) to CF(1) or is implicated in proton conduction. This Bifidobacterium longum subsp. infantis (strain ATCC 15697 / DSM 20088 / JCM 1222 / NCTC 11817 / S12) protein is ATP synthase subunit delta.